The sequence spans 107 residues: Phosphoribosyl-ATP pyrophosphatase (107 aa).

It belongs to the PRA-PH family.

It is found in the cytoplasm. The catalysed reaction is 1-(5-phospho-beta-D-ribosyl)-ATP + H2O = 1-(5-phospho-beta-D-ribosyl)-5'-AMP + diphosphate + H(+). The protein operates within amino-acid biosynthesis; L-histidine biosynthesis; L-histidine from 5-phospho-alpha-D-ribose 1-diphosphate: step 2/9. This is Phosphoribosyl-ATP pyrophosphatase from Bacillus cereus (strain G9842).